The sequence spans 609 residues: Aminopeptidase ltah-1.1 (609 aa).

Substrate contacts are provided by residues 137–139 and 268–273; these read QCQ and PFGGME. His297 provides a ligand contact to Zn(2+). The Proton acceptor role is filled by Glu298. The Zn(2+) site is built by His301 and Glu320. Tyr387 serves as the catalytic Proton donor. Substrate is bound at residue 564-566; it reads RMK.

It belongs to the peptidase M1 family. It depends on Zn(2+) as a cofactor.

The protein localises to the cytoplasm. It carries out the reaction Release of N-terminal Arg and Lys from oligopeptides when P1' is not Pro. Also acts on arylamides of Arg and Lys.. Aminopeptidase which preferentially removes N-terminal Arg and Lys residues from peptides and proteins. The sequence is that of Aminopeptidase ltah-1.1 from Caenorhabditis elegans.